Here is a 454-residue protein sequence, read N- to C-terminus: Bleomycin hydrolase (454 aa).

An N-acetylmethionine modification is found at Met-1. Residues Cys-73 and His-372 contribute to the active site. Position 391 is an N6-acetyllysine (Lys-391). Residue Asn-396 is part of the active site.

Belongs to the peptidase C1 family. As to quaternary structure, homohexamer. Interacts with NUDT12 (via ANK repeats). In terms of tissue distribution, expressed at relatively higher levels in the stomach, esophagus, spleen, thymus and testis, and at lower levels in the skin, lung and skeletal muscle.

Its subcellular location is the cytoplasm. It localises to the cytoplasmic granule. The enzyme catalyses Inactivates bleomycin B2 (a cytotoxic glycometallopeptide) by hydrolysis of a carboxyamide bond of beta-aminoalanine, but also shows general aminopeptidase activity. The specificity varies somewhat with source, but amino acid arylamides of Met, Leu and Ala are preferred.. Its function is as follows. The normal physiological role of BLM hydrolase is unknown, but it catalyzes the inactivation of the antitumor drug BLM (a glycopeptide) by hydrolyzing the carboxamide bond of its B-aminoalaninamide moiety thus protecting normal and malignant cells from BLM toxicity. Binds single-stranded DNA with higher affinity than double-stranded DNA. May play an important role in the metabolism of antibiotics. In Rattus norvegicus (Rat), this protein is Bleomycin hydrolase (Blmh).